Consider the following 219-residue polypeptide: tRNA (guanine-N(7)-)-methyltransferase (219 aa).

Residues Glu44, Asp69, Glu102, and Asn125 each coordinate S-adenosyl-L-methionine. 2 residues coordinate substrate: Lys129 and Asp161.

Belongs to the class I-like SAM-binding methyltransferase superfamily. TrmB family.

It catalyses the reaction guanosine(46) in tRNA + S-adenosyl-L-methionine = N(7)-methylguanosine(46) in tRNA + S-adenosyl-L-homocysteine. It functions in the pathway tRNA modification; N(7)-methylguanine-tRNA biosynthesis. Functionally, catalyzes the formation of N(7)-methylguanine at position 46 (m7G46) in tRNA. This Clostridium perfringens (strain 13 / Type A) protein is tRNA (guanine-N(7)-)-methyltransferase.